A 333-amino-acid chain; its full sequence is Flap endonuclease 1 (333 aa).

An N-domain region spans residues 1 to 99 (MGVALRDILA…ETNAERKKLR (99 aa)). Asp-28, Asp-81, Glu-153, Glu-155, Asp-174, Asp-176, and Asp-235 together coordinate Mg(2+). Residues 117 to 256 (EAYRQARSAT…TALKIVKSGG (140 aa)) form an I-domain region. Residues 325 to 333 (GQKTLESFF) form an interaction with PCNA region.

The protein belongs to the XPG/RAD2 endonuclease family. FEN1 subfamily. In terms of assembly, interacts with PCNA. PCNA stimulates the nuclease activity without altering cleavage specificity. Mg(2+) is required as a cofactor.

In terms of biological role, structure-specific nuclease with 5'-flap endonuclease and 5'-3' exonuclease activities involved in DNA replication and repair. During DNA replication, cleaves the 5'-overhanging flap structure that is generated by displacement synthesis when DNA polymerase encounters the 5'-end of a downstream Okazaki fragment. Binds the unpaired 3'-DNA end and kinks the DNA to facilitate 5' cleavage specificity. Cleaves one nucleotide into the double-stranded DNA from the junction in flap DNA, leaving a nick for ligation. Also involved in the base excision repair (BER) pathway. Acts as a genome stabilization factor that prevents flaps from equilibrating into structures that lead to duplications and deletions. Also possesses 5'-3' exonuclease activity on nicked or gapped double-stranded DNA. This is Flap endonuclease 1 from Methanoregula boonei (strain DSM 21154 / JCM 14090 / 6A8).